The sequence spans 173 residues: Alpha-crystallin A chain (173 aa).

Position 1 is an N-acetylmethionine (Met1). Residues 1–63 (MDVTIQHPWF…RTVLDSGISE (63 aa)) are required for complex formation with BFSP1 and BFSP2. Gln6 bears the Deamidated glutamine; partial mark. Residue Ser45 is modified to Phosphoserine. At Gln50 the chain carries Deamidated glutamine; partial. Residues 52–162 (LFRTVLDSGI…GHSERAIPVS (111 aa)) enclose the sHSP domain. Lys70 bears the N6-acetyllysine mark. Gln90 is modified (deamidated glutamine; partial). An N6-acetyllysine modification is found at Lys99. His100 provides a ligand contact to Zn(2+). At Asn101 the chain carries Deamidated asparagine; partial. Glu102 and His107 together coordinate Zn(2+). The residue at position 122 (Ser122) is a Phosphoserine. Asn123 bears the Deamidated asparagine; partial mark. Residues 145 to 173 (KVQSGLDAGHSERAIPVSREEKPSSAPSS) are disordered. The residue at position 147 (Gln147) is a Deamidated glutamine; partial. Residues 153-167 (GHSERAIPVSREEKP) show a composition bias toward basic and acidic residues. His154 lines the Zn(2+) pocket. The O-linked (GlcNAc) serine glycan is linked to Ser162.

It belongs to the small heat shock protein (HSP20) family. Heteromer composed of three CRYAA and one CRYAB subunits. Inter-subunit bridging via zinc ions enhances stability, which is crucial as there is no protein turn over in the lens. Can also form homodimers and homotetramers (dimers of dimers) which serve as the building blocks of homooligomers. Within homooligomers, the zinc-binding motif is created from residues of 3 different molecules. His-100 and Glu-102 from one molecule are ligands of the zinc ion, and His-107 and His-154 residues from additional molecules complete the site with tetrahedral coordination geometry. Part of a complex required for lens intermediate filament formation composed of BFSP1, BFSP2 and CRYAA. In terms of processing, acetylation at Lys-70 may increase chaperone activity. Post-translationally, undergoes age-dependent proteolytical cleavage at the C-terminus.

It localises to the cytoplasm. The protein localises to the nucleus. Contributes to the transparency and refractive index of the lens. Acts as a chaperone, preventing aggregation of various proteins under a wide range of stress conditions. Required for the correct formation of lens intermediate filaments as part of a complex composed of BFSP1, BFSP2 and CRYAA. The protein is Alpha-crystallin A chain (CRYAA) of Cavia porcellus (Guinea pig).